We begin with the raw amino-acid sequence, 844 residues long: Fe(2+) transport protein A/Fe(2+) transporter FeoB fusion protein (844 aa).

The tract at residues 1–73 (MRLSELHTGD…EDAAKIEVEL (73 aa)) is feoA. The segment at 74–844 (ISSNATSSPA…LIYRIGILFF (771 aa)) is feoB. Residues 79–106 (TSSPASNDIGEQSANPDSNESIPTNPTE) are compositionally biased toward polar residues. Positions 79–110 (TSSPASNDIGEQSANPDSNESIPTNPTEDISA) are disordered. In terms of domain architecture, FeoB-type G spans 126-289 (VIRVALIGNP…FDTLISIHEG (164 aa)). GTP-binding positions include 133–140 (GNPNCGKT), 158–162 (GVTVE), 179–182 (DLPG), 240–243 (NMFD), and 269–271 (VGR). 8 consecutive transmembrane segments (helical) span residues 418–438 (VLGF…TFVL), 475–495 (IGGV…YFFI), 520–540 (LHGK…PAIM), 559–579 (PLMS…AFFP), 581–601 (SAGL…VLLA), 646–666 (MGSI…YPRY), 786–806 (IIAL…ATVV), and 817–837 (WAVF…FLIY).

This sequence in the N-terminal section; belongs to the FeoA family. In the C-terminal section; belongs to the TRAFAC class TrmE-Era-EngA-EngB-Septin-like GTPase superfamily. FeoB GTPase (TC 9.A.8) family.

It is found in the cell inner membrane. Functionally, probable transporter of a GTP-driven Fe(2+) uptake system. This chain is Fe(2+) transport protein A/Fe(2+) transporter FeoB fusion protein, found in Porphyromonas gingivalis (strain ATCC BAA-308 / W83).